Here is a 133-residue protein sequence, read N- to C-terminus: ATP synthase epsilon chain (133 aa).

The protein belongs to the ATPase epsilon chain family. As to quaternary structure, F-type ATPases have 2 components, CF(1) - the catalytic core - and CF(0) - the membrane proton channel. CF(1) has five subunits: alpha(3), beta(3), gamma(1), delta(1), epsilon(1). CF(0) has three main subunits: a, b and c.

It is found in the cell membrane. Produces ATP from ADP in the presence of a proton gradient across the membrane. This is ATP synthase epsilon chain (atpC) from Clostridium acetobutylicum (strain ATCC 824 / DSM 792 / JCM 1419 / IAM 19013 / LMG 5710 / NBRC 13948 / NRRL B-527 / VKM B-1787 / 2291 / W).